The chain runs to 309 residues: Intron-encoded DNA endonuclease ai2a (309 aa).

Belongs to the LAGLIDADG endonuclease family.

It is found in the mitochondrion. Mitochondrial DNA endonuclease involved in intron homing. Cleaves only one strand of intronless DNA sequence at the site which coincides with the I-SceII cleavage recognition site. This is Intron-encoded DNA endonuclease ai2a (ai2a) from Dictyostelium discoideum (Social amoeba).